A 387-amino-acid chain; its full sequence is 4-hydroxy-3-methylbut-2-en-1-yl diphosphate synthase (flavodoxin) (387 aa).

[4Fe-4S] cluster is bound by residues Cys-272, Cys-275, Cys-307, and Glu-314.

This sequence belongs to the IspG family. [4Fe-4S] cluster serves as cofactor.

The enzyme catalyses (2E)-4-hydroxy-3-methylbut-2-enyl diphosphate + oxidized [flavodoxin] + H2O + 2 H(+) = 2-C-methyl-D-erythritol 2,4-cyclic diphosphate + reduced [flavodoxin]. It functions in the pathway isoprenoid biosynthesis; isopentenyl diphosphate biosynthesis via DXP pathway; isopentenyl diphosphate from 1-deoxy-D-xylulose 5-phosphate: step 5/6. Its function is as follows. Converts 2C-methyl-D-erythritol 2,4-cyclodiphosphate (ME-2,4cPP) into 1-hydroxy-2-methyl-2-(E)-butenyl 4-diphosphate. The polypeptide is 4-hydroxy-3-methylbut-2-en-1-yl diphosphate synthase (flavodoxin) (Granulibacter bethesdensis (strain ATCC BAA-1260 / CGDNIH1)).